The sequence spans 429 residues: Light-independent protochlorophyllide reductase subunit N (429 aa).

[4Fe-4S] cluster is bound by residues Cys32, Cys57, and Cys118.

This sequence belongs to the BchN/ChlN family. As to quaternary structure, protochlorophyllide reductase is composed of three subunits; BchL, BchN and BchB. Forms a heterotetramer of two BchB and two BchN subunits. [4Fe-4S] cluster serves as cofactor.

It carries out the reaction chlorophyllide a + oxidized 2[4Fe-4S]-[ferredoxin] + 2 ADP + 2 phosphate = protochlorophyllide a + reduced 2[4Fe-4S]-[ferredoxin] + 2 ATP + 2 H2O. It functions in the pathway porphyrin-containing compound metabolism; bacteriochlorophyll biosynthesis (light-independent). Its function is as follows. Component of the dark-operative protochlorophyllide reductase (DPOR) that uses Mg-ATP and reduced ferredoxin to reduce ring D of protochlorophyllide (Pchlide) to form chlorophyllide a (Chlide). This reaction is light-independent. The NB-protein (BchN-BchB) is the catalytic component of the complex. The polypeptide is Light-independent protochlorophyllide reductase subunit N (Rhodopseudomonas palustris (strain ATCC BAA-98 / CGA009)).